A 92-amino-acid chain; its full sequence is Probable Fe(2+)-trafficking protein (92 aa).

The protein belongs to the Fe(2+)-trafficking protein family.

Its function is as follows. Could be a mediator in iron transactions between iron acquisition and iron-requiring processes, such as synthesis and/or repair of Fe-S clusters in biosynthetic enzymes. This is Probable Fe(2+)-trafficking protein from Shewanella pealeana (strain ATCC 700345 / ANG-SQ1).